Reading from the N-terminus, the 434-residue chain is Trigger factor (434 aa).

The 86-residue stretch at 161–246 (EDRVTVDFTG…LKKVEQRELP (86 aa)) folds into the PPIase FKBP-type domain.

It belongs to the FKBP-type PPIase family. Tig subfamily.

The protein localises to the cytoplasm. The enzyme catalyses [protein]-peptidylproline (omega=180) = [protein]-peptidylproline (omega=0). Its function is as follows. Involved in protein export. Acts as a chaperone by maintaining the newly synthesized protein in an open conformation. Functions as a peptidyl-prolyl cis-trans isomerase. The polypeptide is Trigger factor (Sodalis glossinidius (strain morsitans)).